A 102-amino-acid polypeptide reads, in one-letter code: ATP-dependent Clp protease adapter protein ClpS (102 aa).

Basic and acidic residues predominate over residues 1–18; sequence MSQFDHQHLSDTEEKQEL. Residues 1 to 21 are disordered; it reads MSQFDHQHLSDTEEKQELKPP.

Belongs to the ClpS family. In terms of assembly, binds to the N-terminal domain of the chaperone ClpA.

Functionally, involved in the modulation of the specificity of the ClpAP-mediated ATP-dependent protein degradation. In Idiomarina loihiensis (strain ATCC BAA-735 / DSM 15497 / L2-TR), this protein is ATP-dependent Clp protease adapter protein ClpS.